The sequence spans 118 residues: Large ribosomal subunit protein bL20 (118 aa).

Belongs to the bacterial ribosomal protein bL20 family.

In terms of biological role, binds directly to 23S ribosomal RNA and is necessary for the in vitro assembly process of the 50S ribosomal subunit. It is not involved in the protein synthesizing functions of that subunit. The protein is Large ribosomal subunit protein bL20 of Staphylococcus epidermidis (strain ATCC 35984 / DSM 28319 / BCRC 17069 / CCUG 31568 / BM 3577 / RP62A).